A 154-amino-acid chain; its full sequence is Peptide deformylase (154 aa).

The Fe cation site is built by Cys-90 and His-132. Glu-133 is an active-site residue. Position 136 (His-136) interacts with Fe cation.

Belongs to the polypeptide deformylase family. Requires Fe(2+) as cofactor.

The catalysed reaction is N-terminal N-formyl-L-methionyl-[peptide] + H2O = N-terminal L-methionyl-[peptide] + formate. Functionally, removes the formyl group from the N-terminal Met of newly synthesized proteins. Requires at least a dipeptide for an efficient rate of reaction. N-terminal L-methionine is a prerequisite for activity but the enzyme has broad specificity at other positions. In Halothermothrix orenii (strain H 168 / OCM 544 / DSM 9562), this protein is Peptide deformylase.